A 212-amino-acid chain; its full sequence is Probable nicotinate-nucleotide adenylyltransferase (212 aa).

This sequence belongs to the NadD family.

The catalysed reaction is nicotinate beta-D-ribonucleotide + ATP + H(+) = deamido-NAD(+) + diphosphate. The protein operates within cofactor biosynthesis; NAD(+) biosynthesis; deamido-NAD(+) from nicotinate D-ribonucleotide: step 1/1. Its function is as follows. Catalyzes the reversible adenylation of nicotinate mononucleotide (NaMN) to nicotinic acid adenine dinucleotide (NaAD). This Chromobacterium violaceum (strain ATCC 12472 / DSM 30191 / JCM 1249 / CCUG 213 / NBRC 12614 / NCIMB 9131 / NCTC 9757 / MK) protein is Probable nicotinate-nucleotide adenylyltransferase.